The sequence spans 282 residues: Glycine/sarcosine N-methyltransferase (282 aa).

Polar residues predominate over residues 1-23 (MTSTQNHPLQTQDDQQRFGQSPE). The segment at 1 to 27 (MTSTQNHPLQTQDDQQRFGQSPESVRE) is disordered. S-adenosyl-L-methionine is bound by residues Tyr-35, Trp-43, Arg-52, Ala-76, Asp-97, 123–124 (DW), and Leu-141. Substrate is bound by residues Asn-143, Arg-176, and Tyr-217.

Belongs to the class I-like SAM-binding methyltransferase superfamily. Glycine N-methyltransferase family. In terms of assembly, monomer.

The enzyme catalyses glycine + 2 S-adenosyl-L-methionine = N,N-dimethylglycine + 2 S-adenosyl-L-homocysteine + 2 H(+). The catalysed reaction is glycine + S-adenosyl-L-methionine = sarcosine + S-adenosyl-L-homocysteine + H(+). It catalyses the reaction sarcosine + S-adenosyl-L-methionine = N,N-dimethylglycine + S-adenosyl-L-homocysteine + H(+). Its pathway is amine and polyamine biosynthesis; betaine biosynthesis via glycine pathway; betaine from glycine: step 1/3. The protein operates within amine and polyamine biosynthesis; betaine biosynthesis via glycine pathway; betaine from glycine: step 2/3. Its function is as follows. Catalyzes the methylation of glycine and sarcosine to sarcosine and dimethylglycine, respectively, with S-adenosylmethionine (AdoMet) acting as the methyl donor. It has strict specificity for glycine and sarcosine as the methyl group acceptors. In Parasynechococcus marenigrum (strain WH8102), this protein is Glycine/sarcosine N-methyltransferase.